Consider the following 359-residue polypeptide: DNA polymerase IV (359 aa).

A UmuC domain is found at 4 to 185 (IIHVDMDCFF…LALIKIPGVG (182 aa)). Positions 8 and 103 each coordinate Mg(2+). Residue Glu-104 is part of the active site.

This sequence belongs to the DNA polymerase type-Y family. Monomer. The cofactor is Mg(2+).

The protein resides in the cytoplasm. It carries out the reaction DNA(n) + a 2'-deoxyribonucleoside 5'-triphosphate = DNA(n+1) + diphosphate. In terms of biological role, poorly processive, error-prone DNA polymerase involved in untargeted mutagenesis. Copies undamaged DNA at stalled replication forks, which arise in vivo from mismatched or misaligned primer ends. These misaligned primers can be extended by PolIV. Exhibits no 3'-5' exonuclease (proofreading) activity. May be involved in translesional synthesis, in conjunction with the beta clamp from PolIII. This Shewanella loihica (strain ATCC BAA-1088 / PV-4) protein is DNA polymerase IV.